Reading from the N-terminus, the 32-residue chain is Corticostatin-related peptide RK-1 (32 aa).

3 disulfides stabilise this stretch: Cys3–Cys29, Cys5–Cys19, and Cys9–Cys28.

It localises to the secreted. Has antimicrobial activity against E.coli and activates ion channel activity. The protein is Corticostatin-related peptide RK-1 of Oryctolagus cuniculus (Rabbit).